The primary structure comprises 249 residues: DNA repair protein RecO (249 aa).

The protein belongs to the RecO family.

Functionally, involved in DNA repair and RecF pathway recombination. The polypeptide is DNA repair protein RecO (Lactobacillus delbrueckii subsp. bulgaricus (strain ATCC 11842 / DSM 20081 / BCRC 10696 / JCM 1002 / NBRC 13953 / NCIMB 11778 / NCTC 12712 / WDCM 00102 / Lb 14)).